The following is a 31-amino-acid chain: Toxin BmKK16 (31 aa).

Gln1 is subject to Pyrrolidone carboxylic acid. 3 disulfides stabilise this stretch: Cys4-Cys20, Cys10-Cys25, and Cys14-Cys27. The residue at position 31 (Pro31) is a Proline amide.

Belongs to the short scorpion toxin superfamily. Potassium channel inhibitor family. Alpha-KTx 17 subfamily. The N-terminus is blocked. Expressed by the venom gland.

The protein resides in the secreted. Its function is as follows. Blocker of potassium channels (Kv). In Olivierus martensii (Manchurian scorpion), this protein is Toxin BmKK16.